We begin with the raw amino-acid sequence, 218 residues long: Octanoyltransferase (218 aa).

The BPL/LPL catalytic domain occupies 32 to 218 (GEAAEAIWLL…LRTFPQHFPD (187 aa)). Substrate is bound by residues 71–78 (RGGQYTYH), 151–153 (AIG), and 164–166 (GLS). Cysteine 182 functions as the Acyl-thioester intermediate in the catalytic mechanism.

This sequence belongs to the LipB family.

It localises to the cytoplasm. The catalysed reaction is octanoyl-[ACP] + L-lysyl-[protein] = N(6)-octanoyl-L-lysyl-[protein] + holo-[ACP] + H(+). It participates in protein modification; protein lipoylation via endogenous pathway; protein N(6)-(lipoyl)lysine from octanoyl-[acyl-carrier-protein]: step 1/2. Its function is as follows. Catalyzes the transfer of endogenously produced octanoic acid from octanoyl-acyl-carrier-protein onto the lipoyl domains of lipoate-dependent enzymes. Lipoyl-ACP can also act as a substrate although octanoyl-ACP is likely to be the physiological substrate. This is Octanoyltransferase from Cereibacter sphaeroides (strain ATCC 17029 / ATH 2.4.9) (Rhodobacter sphaeroides).